A 779-amino-acid polypeptide reads, in one-letter code: Acyl-homoserine lactone acylase PvdQ (779 aa).

An N-terminal signal peptide occupies residues 1-25 (MIISRPLCGFVFAGLSFAVILPAQA). The propeptide at 202–223 (SQQVQALQLAAVRNQRFALERG) is spacer peptide. Residue serine 224 is the Nucleophile of the active site. Over residues 731–746 (ESSNPQSAHSSDQTEA) the composition is skewed to polar residues. The segment at 731–752 (ESSNPQSAHSSDQTEAFSKKQW) is disordered.

Belongs to the peptidase S45 family. Heterodimer of an alpha subunit and a beta subunit processed from the same precursor.

The protein localises to the periplasm. The catalysed reaction is an N-acyl-L-homoserine lactone + H2O = L-homoserine lactone + a carboxylate. In terms of biological role, catalyzes the deacylation of acyl-homoserine lactone (AHL or acyl-HSL), releasing homoserine lactone (HSL) and the corresponding fatty acid. Possesses a specificity for the degradation of long-chain acyl-HSLs (side chains of 11 to 14 carbons in length). This Pseudomonas savastanoi pv. phaseolicola (strain 1448A / Race 6) (Pseudomonas syringae pv. phaseolicola (strain 1448A / Race 6)) protein is Acyl-homoserine lactone acylase PvdQ (pvdQ).